We begin with the raw amino-acid sequence, 124 residues long: Small ribosomal subunit protein uS12 (124 aa).

Position 89 is a 3-methylthioaspartic acid (D89). Positions 103–124 (DTAGVQKRRQGRSKYGAKRPKS) are disordered. Over residues 108-124 (QKRRQGRSKYGAKRPKS) the composition is skewed to basic residues.

It belongs to the universal ribosomal protein uS12 family. As to quaternary structure, part of the 30S ribosomal subunit. Contacts proteins S8 and S17. May interact with IF1 in the 30S initiation complex.

With S4 and S5 plays an important role in translational accuracy. Its function is as follows. Interacts with and stabilizes bases of the 16S rRNA that are involved in tRNA selection in the A site and with the mRNA backbone. Located at the interface of the 30S and 50S subunits, it traverses the body of the 30S subunit contacting proteins on the other side and probably holding the rRNA structure together. The combined cluster of proteins S8, S12 and S17 appears to hold together the shoulder and platform of the 30S subunit. The sequence is that of Small ribosomal subunit protein uS12 from Methylococcus capsulatus (strain ATCC 33009 / NCIMB 11132 / Bath).